Here is a 220-residue protein sequence, read N- to C-terminus: Protein GrpE (220 aa).

The tract at residues 1–22 (MSDEKNKFTDASFENCDLKNPS) is disordered.

It belongs to the GrpE family. As to quaternary structure, homodimer.

The protein localises to the cytoplasm. In terms of biological role, participates actively in the response to hyperosmotic and heat shock by preventing the aggregation of stress-denatured proteins, in association with DnaK and GrpE. It is the nucleotide exchange factor for DnaK and may function as a thermosensor. Unfolded proteins bind initially to DnaJ; upon interaction with the DnaJ-bound protein, DnaK hydrolyzes its bound ATP, resulting in the formation of a stable complex. GrpE releases ADP from DnaK; ATP binding to DnaK triggers the release of the substrate protein, thus completing the reaction cycle. Several rounds of ATP-dependent interactions between DnaJ, DnaK and GrpE are required for fully efficient folding. This Bartonella henselae (strain ATCC 49882 / DSM 28221 / CCUG 30454 / Houston 1) (Rochalimaea henselae) protein is Protein GrpE.